Here is a 154-residue protein sequence, read N- to C-terminus: Nucleoside diphosphate kinase A1 (154 aa).

Residues lysine 13, phenylalanine 61, arginine 89, threonine 95, arginine 106, and asparagine 116 each coordinate ATP. The active-site Pros-phosphohistidine intermediate is the histidine 119.

It belongs to the NDK family. Requires Mg(2+) as cofactor.

It localises to the cytoplasm. The catalysed reaction is a 2'-deoxyribonucleoside 5'-diphosphate + ATP = a 2'-deoxyribonucleoside 5'-triphosphate + ADP. It carries out the reaction a ribonucleoside 5'-diphosphate + ATP = a ribonucleoside 5'-triphosphate + ADP. In terms of biological role, major role in the synthesis of nucleoside triphosphates other than ATP. The ATP gamma phosphate is transferred to the NDP beta phosphate via a ping-pong mechanism, using a phosphorylated active-site intermediate. This is Nucleoside diphosphate kinase A1 from Xenopus laevis (African clawed frog).